Here is a 134-residue protein sequence, read N- to C-terminus: Putative oxidoreductase CatD (134 aa).

A run of 4 helical transmembrane segments spans residues 5–25, 46–66, 70–90, and 91–111; these read FEIG…VHGL, FMAY…FFGL, IVGV…KLKA, and PFMG…HLAL.

It belongs to the DoxX family.

Its subcellular location is the cell membrane. Essential for growth and viability in the presence of catechol and probably involved in the detoxification of catechol. The chain is Putative oxidoreductase CatD (catD) from Bacillus subtilis (strain 168).